The primary structure comprises 206 residues: Alpha-amylase/trypsin inhibitor (206 aa).

8 cysteine pairs are disulfide-bonded: C9–C205, C51–C61, C66–C72, C118–C194, C124–C177, C132–C142, C146–C155, and C156–C164.

This sequence belongs to the thaumatin family.

Its function is as follows. Inhibits both trypsin and alpha-amylase. Inhibits the growth of some plant fungal pathogens. The polypeptide is Alpha-amylase/trypsin inhibitor (Zea mays (Maize)).